Consider the following 218-residue polypeptide: Large ribosomal subunit protein uL3 (218 aa).

It belongs to the universal ribosomal protein uL3 family. In terms of assembly, part of the 50S ribosomal subunit. Forms a cluster with proteins L14 and L19.

Functionally, one of the primary rRNA binding proteins, it binds directly near the 3'-end of the 23S rRNA, where it nucleates assembly of the 50S subunit. The chain is Large ribosomal subunit protein uL3 from Brachyspira pilosicoli (Serpulina pilosicoli).